Consider the following 157-residue polypeptide: Ribosome maturation factor RimP (157 aa).

Belongs to the RimP family.

The protein localises to the cytoplasm. In terms of biological role, required for maturation of 30S ribosomal subunits. The sequence is that of Ribosome maturation factor RimP from Lactococcus lactis subsp. lactis (strain IL1403) (Streptococcus lactis).